The sequence spans 327 residues: Malate dehydrogenase (327 aa).

11–17 (GAAGQIA) serves as a coordination point for NAD(+). Substrate-binding residues include Arg92 and Arg98. NAD(+)-binding positions include Asn105, Gln112, and 128–130 (VGN). Substrate is bound by residues Asn130 and Arg160. His185 acts as the Proton acceptor in catalysis.

The protein belongs to the LDH/MDH superfamily. MDH type 2 family.

It catalyses the reaction (S)-malate + NAD(+) = oxaloacetate + NADH + H(+). In terms of biological role, catalyzes the reversible oxidation of malate to oxaloacetate. In Magnetococcus marinus (strain ATCC BAA-1437 / JCM 17883 / MC-1), this protein is Malate dehydrogenase.